Reading from the N-terminus, the 521-residue chain is GMP synthase [glutamine-hydrolyzing] (521 aa).

The Glutamine amidotransferase type-1 domain occupies 5-197; that stretch reads KILILDFGSQ…VLDICGAQPG (193 aa). Cys-81 functions as the Nucleophile in the catalytic mechanism. Catalysis depends on residues His-171 and Glu-173. The GMPS ATP-PPase domain occupies 198-390; the sequence is WTMPNYIEEA…LGLPREMVYR (193 aa). Residue 225–231 coordinates ATP; the sequence is SGGVDSS.

In terms of assembly, homodimer.

The enzyme catalyses XMP + L-glutamine + ATP + H2O = GMP + L-glutamate + AMP + diphosphate + 2 H(+). It functions in the pathway purine metabolism; GMP biosynthesis; GMP from XMP (L-Gln route): step 1/1. Catalyzes the synthesis of GMP from XMP. The protein is GMP synthase [glutamine-hydrolyzing] of Neisseria gonorrhoeae (strain ATCC 700825 / FA 1090).